We begin with the raw amino-acid sequence, 597 residues long: Arginine--tRNA ligase (597 aa).

Residues 125 to 135 carry the 'HIGH' region motif; that stretch reads PNTNKPLHLGH.

It belongs to the class-I aminoacyl-tRNA synthetase family. As to quaternary structure, monomer.

Its subcellular location is the cytoplasm. It catalyses the reaction tRNA(Arg) + L-arginine + ATP = L-arginyl-tRNA(Arg) + AMP + diphosphate. The polypeptide is Arginine--tRNA ligase (Parabacteroides distasonis (strain ATCC 8503 / DSM 20701 / CIP 104284 / JCM 5825 / NCTC 11152)).